A 1349-amino-acid polypeptide reads, in one-letter code: DNA-directed RNA polymerase subunit beta' (1349 aa).

The Zn(2+) site is built by Cys70, Cys72, Cys85, and Cys88. Residues Asp460, Asp462, and Asp464 each contribute to the Mg(2+) site. 4 residues coordinate Zn(2+): Cys801, Cys875, Cys882, and Cys885.

The protein belongs to the RNA polymerase beta' chain family. The RNAP catalytic core consists of 2 alpha, 1 beta, 1 beta' and 1 omega subunit. When a sigma factor is associated with the core the holoenzyme is formed, which can initiate transcription. It depends on Mg(2+) as a cofactor. The cofactor is Zn(2+).

The catalysed reaction is RNA(n) + a ribonucleoside 5'-triphosphate = RNA(n+1) + diphosphate. Its function is as follows. DNA-dependent RNA polymerase catalyzes the transcription of DNA into RNA using the four ribonucleoside triphosphates as substrates. In Desulfotalea psychrophila (strain LSv54 / DSM 12343), this protein is DNA-directed RNA polymerase subunit beta'.